Here is a 744-residue protein sequence, read N- to C-terminus: MATANFGKIQIGIYVEIKRSDGRIHQAMVTSLNEDNESVTVEWIENGDTKGKEIDLESIFSLNPDLVPDEEIEPSPETPPPPASSAKVNKIVKNRRTVASIKNDPPPRDNRVVGSARARPSQFPEQSSSAQQNGSVSDISPVQAAKKEFGPPSRRKSNCVKEVEKLQEKREKRRLQQQELREKRAQDVDATNPNYEIMCMIRDFRGSLDYRPLTTADPIDEHRICVCVRKRPLNKKETQMKDLDVITIPSKDVVMVHEPKQKVDLTRYLENQTFRFDYAFDDSAPNEMVYRFTARPLVETIFERGMATCFAYGQTGSGKTHTMGGDFSGKNQDCSKGIYALAARDVFLMLKKPNYKKLELQVYATFFEIYSGKVFDLLNRKTKLRVLEDGKQQVQVVGLQEREVKCVEDVLKLIDIGNSCRTSGQTSANAHSSRSHAVFQIILRRKGKLHGKFSLIDLAGNERGADTSSADRQTRLEGAEINKSLLALKECIRALGRNKPHTPFRASKLTQVLRDSFIGENSRTCMIATISPGMASCENTLNTLRYANRVKEFGISPSDIPFSQGSGSRPDLSPSYEYDDFSPSVTRVKELTVDPTAAGDVRPIMHHPPNQIDDLETQWGVGSSPQRDDLKLLCEQNEEEVSPQLFTFHEAVSQMVEMEEQVVEDHRAVFQESIRWLEDEKALLEMTEEVDYDVDSYATQLEAILEQKIDILTELRDKVKSFRAALQEEEQASKQINPKRPRAL.

The interval 66–186 (LVPDEEIEPS…QQELREKRAQ (121 aa)) is disordered. A Phosphoserine modification is found at Ser-75. Phosphothreonine is present on residues Thr-78 and Thr-97. A Phosphoserine modification is found at Ser-100. At Lys-102 the chain carries N6-acetyllysine. Positions 123–140 (FPEQSSSAQQNGSVSDIS) are enriched in polar residues. Ser-135 and Ser-140 each carry phosphoserine. Residues 154–187 (RRKSNCVKEVEKLQEKREKRRLQQQELREKRAQD) are a coiled coil. Basic and acidic residues predominate over residues 159-186 (CVKEVEKLQEKREKRRLQQQELREKRAQ). The Kinesin motor domain maps to 223–553 (RICVCVRKRP…LRYANRVKEF (331 aa)). 313 to 320 (GQTGSGKT) lines the ATP pocket. Residues 698-737 (ATQLEAILEQKIDILTELRDKVKSFRAALQEEEQASKQIN) are a coiled coil.

This sequence belongs to the TRAFAC class myosin-kinesin ATPase superfamily. Kinesin family. MCAK/KIF2 subfamily. As to quaternary structure, interacts with AURKA and PLK1. Interacts with PSRC1. Interacts with MCRS1; the interaction enhances recruitment of KIF2A to the minus ends of spindle microtubules which promotes chromosome alignment.

Its subcellular location is the cytoplasm. It is found in the cytoskeleton. The protein localises to the microtubule organizing center. The protein resides in the centrosome. It localises to the spindle pole. Its subcellular location is the spindle. Its function is as follows. Plus end-directed microtubule-dependent motor required for normal brain development. May regulate microtubule dynamics during axonal growth. Required for normal progression through mitosis. Required for normal congress of chromosomes at the metaphase plate. Required for normal spindle dynamics during mitosis. Promotes spindle turnover. Implicated in formation of bipolar mitotic spindles. Has microtubule depolymerization activity. This Pongo abelii (Sumatran orangutan) protein is Kinesin-like protein KIF2A.